Reading from the N-terminus, the 1217-residue chain is Myosin-5 (1217 aa).

Basic residues predominate over residues 1 to 11 (MAILKRGARNK). Positions 1-24 (MAILKRGARNKTHQEPAKRGGNNI) are disordered. Positions 37–716 (VGVSDLTLLT…TLFALENMRD (680 aa)) constitute a Myosin motor domain. 130–137 (GESGAGKT) lines the ATP pocket. Position 358 is a phosphoserine (serine 358). The interval 405-487 (SIGILDIYGF…PGIFAAMNDS (83 aa)) is actin-binding. IQ domains are found at residues 720–740 (HNMA…RIDA) and 741–766 (AVKI…YGTS). A TH1 domain is found at 772–962 (KERRSMSLLG…TIFVRRGNPA (191 aa)). Disordered regions lie at residues 956–1102 (VRRG…NPSE), 1145–1174 (GAKA…AQTV), and 1197–1217 (NKMR…DDDW). The span at 965 to 974 (KSKKKPRKKS) shows a compositional bias: basic residues. A compositionally biased stretch (polar residues) spans 976–987 (GMSAPTTQSSKT). Positions 994-1007 (SSNNQNTTVSQSLN) are enriched in low complexity. Residues 1025 to 1038 (PAPPPPGSKKPAPQ) show a composition bias toward pro residues. Low complexity predominate over residues 1050 to 1071 (PQAQMQTQTQIPASQSSATQSS). Positions 1072–1081 (IPPPPPPPPS) are enriched in pro residues. Positions 1083–1145 (TSEPQFEAAY…PTAYMVKHEG (63 aa)) constitute an SH3 domain. Polar residues predominate over residues 1162–1174 (IQNQSQPASAQTV). The span at 1203–1217 (SDEEAAASSDNDDDW) shows a compositional bias: acidic residues.

Belongs to the TRAFAC class myosin-kinesin ATPase superfamily. Myosin family. In terms of processing, phosphorylation of the TEDS site (Ser-358) is required for the polarization of the actin cytoskeleton. Phosphorylation probably activates the myosin-I ATPase activity.

It is found in the cytoplasm. Its subcellular location is the cytoskeleton. It localises to the actin patch. Its function is as follows. Type-I myosin implicated in the organization of the actin cytoskeleton. Required for proper actin cytoskeleton polarization. At the cell cortex, assembles in patch-like structures together with proteins from the actin-polymerizing machinery and promotes actin assembly. Functions as actin nucleation-promoting factor (NPF) for the Arp2/3 complex. The chain is Myosin-5 (MYO5) from Candida glabrata (strain ATCC 2001 / BCRC 20586 / JCM 3761 / NBRC 0622 / NRRL Y-65 / CBS 138) (Yeast).